The following is a 34-amino-acid chain: Photosystem II reaction center protein Psb30 (34 aa).

A helical membrane pass occupies residues 5 to 25; sequence VLAQLTVLAFVIAVGPITLIW.

This sequence belongs to the Psb30/Ycf12 family. As to quaternary structure, PSII is composed of 1 copy each of membrane proteins PsbA, PsbB, PsbC, PsbD, PsbE, PsbF, PsbH, PsbI, PsbJ, PsbK, PsbL, PsbM, PsbT, PsbX, PsbY, PsbZ, Psb30/Ycf12, peripheral proteins of the oxygen-evolving complex and a large number of cofactors. It forms dimeric complexes.

The protein localises to the plastid. Its subcellular location is the chloroplast thylakoid membrane. Its function is as follows. A core subunit of photosystem II (PSII), probably helps stabilize the reaction center. The polypeptide is Photosystem II reaction center protein Psb30 (Cyanidioschyzon merolae (strain NIES-3377 / 10D) (Unicellular red alga)).